The following is a 348-amino-acid chain: Holliday junction branch migration complex subunit RuvB (348 aa).

The interval 1 to 183 is large ATPase domain (RuvB-L); it reads MTEASRIVAP…FGIPVRLNFY (183 aa). Residues Leu-22, Arg-23, Gly-64, Lys-67, Thr-68, Thr-69, 130–132, Arg-173, Tyr-183, and Arg-220 each bind ATP; that span reads EDF. Thr-68 contacts Mg(2+). The segment at 184–254 is small ATPAse domain (RuvB-S); it reads TEDELEKIVS…VADHALGALE (71 aa). Residues 257 to 348 form a head domain (RuvB-H) region; that stretch reads AAGLDAMDRR…SGLFGQDEDR (92 aa). DNA contacts are provided by Arg-293, Arg-312, and Arg-317. Residues 329 to 348 form a disordered region; that stretch reads LTEPSRDPAQSGLFGQDEDR.

It belongs to the RuvB family. Homohexamer. Forms an RuvA(8)-RuvB(12)-Holliday junction (HJ) complex. HJ DNA is sandwiched between 2 RuvA tetramers; dsDNA enters through RuvA and exits via RuvB. An RuvB hexamer assembles on each DNA strand where it exits the tetramer. Each RuvB hexamer is contacted by two RuvA subunits (via domain III) on 2 adjacent RuvB subunits; this complex drives branch migration. In the full resolvosome a probable DNA-RuvA(4)-RuvB(12)-RuvC(2) complex forms which resolves the HJ.

Its subcellular location is the cytoplasm. The catalysed reaction is ATP + H2O = ADP + phosphate + H(+). Functionally, the RuvA-RuvB-RuvC complex processes Holliday junction (HJ) DNA during genetic recombination and DNA repair, while the RuvA-RuvB complex plays an important role in the rescue of blocked DNA replication forks via replication fork reversal (RFR). RuvA specifically binds to HJ cruciform DNA, conferring on it an open structure. The RuvB hexamer acts as an ATP-dependent pump, pulling dsDNA into and through the RuvAB complex. RuvB forms 2 homohexamers on either side of HJ DNA bound by 1 or 2 RuvA tetramers; 4 subunits per hexamer contact DNA at a time. Coordinated motions by a converter formed by DNA-disengaged RuvB subunits stimulates ATP hydrolysis and nucleotide exchange. Immobilization of the converter enables RuvB to convert the ATP-contained energy into a lever motion, pulling 2 nucleotides of DNA out of the RuvA tetramer per ATP hydrolyzed, thus driving DNA branch migration. The RuvB motors rotate together with the DNA substrate, which together with the progressing nucleotide cycle form the mechanistic basis for DNA recombination by continuous HJ branch migration. Branch migration allows RuvC to scan DNA until it finds its consensus sequence, where it cleaves and resolves cruciform DNA. The chain is Holliday junction branch migration complex subunit RuvB from Nitrobacter winogradskyi (strain ATCC 25391 / DSM 10237 / CIP 104748 / NCIMB 11846 / Nb-255).